The chain runs to 150 residues: MQKAIRPYESPWTKTVPGNSIFLLKNEDKPSSSSSSLSWLTSGSPKPTSISNKRSSNLVVMENAVVVFARRGCCLGHVAKRLLLTHGVNPVVVEIGEEDNNNYDNIVSDKEKLPMMYIGGKLFGGLENLMAAHINGDLVPTLRQAGALWL.

The segment at 30–52 is disordered; that stretch reads PSSSSSSLSWLTSGSPKPTSISN. Residues 31–44 show a composition bias toward low complexity; that stretch reads SSSSSSLSWLTSGS. A Glutaredoxin domain is found at 53–149; it reads KRSSNLVVME…PTLRQAGALW (97 aa). A [2Fe-2S] cluster-binding site is contributed by C73. The Responsive for interaction with TGA factors motif lies at 147–150; sequence ALWL.

Belongs to the glutaredoxin family. CC-type subfamily.

The protein localises to the cytoplasm. The protein resides in the nucleus. In terms of biological role, may only reduce GSH-thiol disulfides, but not protein disulfides. In Arabidopsis thaliana (Mouse-ear cress), this protein is Monothiol glutaredoxin-S13 (GRXS13).